Here is a 256-residue protein sequence, read N- to C-terminus: tRNA (guanine-N(1)-)-methyltransferase (256 aa).

S-adenosyl-L-methionine-binding positions include G113 and 132 to 137; that span reads VGDYVL.

It belongs to the RNA methyltransferase TrmD family. In terms of assembly, homodimer.

The protein resides in the cytoplasm. The enzyme catalyses guanosine(37) in tRNA + S-adenosyl-L-methionine = N(1)-methylguanosine(37) in tRNA + S-adenosyl-L-homocysteine + H(+). In terms of biological role, specifically methylates guanosine-37 in various tRNAs. This Coprothermobacter proteolyticus (strain ATCC 35245 / DSM 5265 / OCM 4 / BT) protein is tRNA (guanine-N(1)-)-methyltransferase.